Here is an 88-residue protein sequence, read N- to C-terminus: Small ribosomal subunit protein uS19 (88 aa).

Belongs to the universal ribosomal protein uS19 family.

In terms of biological role, protein S19 forms a complex with S13 that binds strongly to the 16S ribosomal RNA. This Chlamydia caviae (strain ATCC VR-813 / DSM 19441 / 03DC25 / GPIC) (Chlamydophila caviae) protein is Small ribosomal subunit protein uS19.